Consider the following 93-residue polypeptide: MFTIELILRGNPVALAVQRKDQTAAGDLYAKIRDAMNASPPRVIELTCDKVPEKHLAVMSSDVVAVQLTAAKSGSGAPMGMRAGFFAGESEDE.

This sequence belongs to the UPF0367 family.

In Gloeobacter violaceus (strain ATCC 29082 / PCC 7421), this protein is UPF0367 protein gsr3177.